A 642-amino-acid polypeptide reads, in one-letter code: Threonine--tRNA ligase (642 aa).

Positions 1–61 (MPVITLPDGS…ETDATLSIIT (61 aa)) constitute a TGS domain. The segment at 243–534 (DHRKIGKQLD…LTEETAGYFP (292 aa)) is catalytic. Zn(2+) is bound by residues Cys334, His385, and His511.

This sequence belongs to the class-II aminoacyl-tRNA synthetase family. As to quaternary structure, homodimer. Zn(2+) is required as a cofactor.

The protein localises to the cytoplasm. The catalysed reaction is tRNA(Thr) + L-threonine + ATP = L-threonyl-tRNA(Thr) + AMP + diphosphate + H(+). Functionally, catalyzes the attachment of threonine to tRNA(Thr) in a two-step reaction: L-threonine is first activated by ATP to form Thr-AMP and then transferred to the acceptor end of tRNA(Thr). Also edits incorrectly charged L-seryl-tRNA(Thr). The polypeptide is Threonine--tRNA ligase (Tolumonas auensis (strain DSM 9187 / NBRC 110442 / TA 4)).